Reading from the N-terminus, the 312-residue chain is Ribosomal protein L11 methyltransferase (312 aa).

The S-adenosyl-L-methionine site is built by Thr160, Gly181, Asp203, and Asn248.

The protein belongs to the methyltransferase superfamily. PrmA family.

Its subcellular location is the cytoplasm. The catalysed reaction is L-lysyl-[protein] + 3 S-adenosyl-L-methionine = N(6),N(6),N(6)-trimethyl-L-lysyl-[protein] + 3 S-adenosyl-L-homocysteine + 3 H(+). Methylates ribosomal protein L11. The sequence is that of Ribosomal protein L11 methyltransferase from Fusobacterium nucleatum subsp. nucleatum (strain ATCC 25586 / DSM 15643 / BCRC 10681 / CIP 101130 / JCM 8532 / KCTC 2640 / LMG 13131 / VPI 4355).